A 313-amino-acid chain; its full sequence is Protein FixB (313 aa).

255 to 283 (LYLAVGISGQIQHMVGANASQTIFAINKD) contributes to the FAD binding site.

This sequence belongs to the ETF alpha-subunit/FixB family. Heterodimer of FixA and FixB.

It participates in amine and polyamine metabolism; carnitine metabolism. Its function is as follows. Required for anaerobic carnitine reduction. May bring reductant to CaiA. The chain is Protein FixB from Escherichia coli (strain SMS-3-5 / SECEC).